Here is a 352-residue protein sequence, read N- to C-terminus: Glutamine synthetase cytosolic isozyme (352 aa).

In terms of domain architecture, GS beta-grasp spans 19–98 (FIAEYIWIDA…VMCDTYTPAG (80 aa)). Residues 105–352 (KRCNAAKIFS…TSMIAETTIL (248 aa)) enclose the GS catalytic domain.

Belongs to the glutamine synthetase family. As to quaternary structure, homooctamer.

The protein resides in the cytoplasm. The catalysed reaction is L-glutamate + NH4(+) + ATP = L-glutamine + ADP + phosphate + H(+). The protein is Glutamine synthetase cytosolic isozyme (GLN1) of Daucus carota (Wild carrot).